We begin with the raw amino-acid sequence, 229 residues long: MIIKNPIIKGKFIERLNRFEAYVEIDGIKTLVHVPNTGRLKEILVKGADVLLEVREKKGRKTPYELAFAYKGKRLISIDSQVPNKVFLESIKKGIVEEFRGYELVEKEKSFGNSKFDIKLTNGKEICYIEVKGVTLEVDGVAKFPDAPTERGRKHLKELIKVKEEGMRAAVVFLIQMDDIKYFTPNDEQDPQFGQFLREAFTKGVEVYAYTCDVGENFINLKNRVQVVL.

It belongs to the SfsA family.

In Caldanaerobacter subterraneus subsp. tengcongensis (strain DSM 15242 / JCM 11007 / NBRC 100824 / MB4) (Thermoanaerobacter tengcongensis), this protein is Sugar fermentation stimulation protein homolog.